Reading from the N-terminus, the 330-residue chain is 4-hydroxythreonine-4-phosphate dehydrogenase (330 aa).

Residues histidine 134 and threonine 135 each coordinate substrate. The a divalent metal cation site is built by histidine 163, histidine 208, and histidine 263. Lysine 271, asparagine 280, and arginine 289 together coordinate substrate.

The protein belongs to the PdxA family. In terms of assembly, homodimer. Requires Zn(2+) as cofactor. Mg(2+) serves as cofactor. The cofactor is Co(2+).

It localises to the cytoplasm. The catalysed reaction is 4-(phosphooxy)-L-threonine + NAD(+) = 3-amino-2-oxopropyl phosphate + CO2 + NADH. Its pathway is cofactor biosynthesis; pyridoxine 5'-phosphate biosynthesis; pyridoxine 5'-phosphate from D-erythrose 4-phosphate: step 4/5. Catalyzes the NAD(P)-dependent oxidation of 4-(phosphooxy)-L-threonine (HTP) into 2-amino-3-oxo-4-(phosphooxy)butyric acid which spontaneously decarboxylates to form 3-amino-2-oxopropyl phosphate (AHAP). In Methylococcus capsulatus (strain ATCC 33009 / NCIMB 11132 / Bath), this protein is 4-hydroxythreonine-4-phosphate dehydrogenase.